A 289-amino-acid polypeptide reads, in one-letter code: N-acetylmuramoyl-L-alanine amidase AmiA (289 aa).

Residues 1–34 constitute a signal peptide (tat-type signal); that stretch reads MSTFKLLKTLTSRRQVLKTGLAALTLSGMSHAVA. The tract at residues 36 to 61 is disordered; it reads EETLKTSNGHSKPKTKKTGSKRLVML. Residues 46 to 55 show a composition bias toward basic residues; the sequence is SKPKTKKTGS. The 215-residue stretch at 59–273 folds into the MurNAc-LAA domain; that stretch reads VMLDPGHGGI…IATAIANGII (215 aa).

It belongs to the N-acetylmuramoyl-L-alanine amidase 3 family. In terms of processing, predicted to be exported by the Tat system. The position of the signal peptide cleavage has not been experimentally proven.

The protein localises to the periplasm. It carries out the reaction Hydrolyzes the link between N-acetylmuramoyl residues and L-amino acid residues in certain cell-wall glycopeptides.. Functionally, cell-wall hydrolase involved in septum cleavage during cell division. The protein is N-acetylmuramoyl-L-alanine amidase AmiA (amiA) of Salmonella typhimurium (strain LT2 / SGSC1412 / ATCC 700720).